Consider the following 468-residue polypeptide: Aspartate ammonia-lyase (468 aa).

6 residues coordinate L-aspartate: threonine 101, serine 140, threonine 141, asparagine 142, threonine 187, and histidine 188. The segment at 317–326 is SS loop; the sequence is GSSIMPGKVN. Serine 318 functions as the Proton acceptor in the catalytic mechanism. Residues serine 319 and lysine 324 each coordinate L-aspartate.

The protein belongs to the class-II fumarase/aspartase family. Aspartase subfamily. As to quaternary structure, homotetramer.

It carries out the reaction L-aspartate = fumarate + NH4(+). Its activity is regulated as follows. Unlike E.coli aspartase, the enzyme is not activated by the presence of divalent metal ions at alkaline pH. In terms of biological role, catalyzes the reversible conversion of L-aspartate to fumarate and ammonia. Is highly specific for L-aspartate in the deamination reaction, and cannot use alternative substrates such as D-aspartic acid, alpha-methyl-DL-aspartic acid, beta-methyl-DL-aspartic acid or L-glutamate. In the reverse reaction, alternative nucleophiles (such as hydroxylamine, hydrazine, methoxylamine and methylamine) can replace ammonia in vitro, leading to the formation of N-substituted aspartic acid derivatives. The protein is Aspartate ammonia-lyase of Bacillus sp.